A 2850-amino-acid polypeptide reads, in one-letter code: Mucin-6 (2850 aa).

An N-terminal signal peptide occupies residues 1 to 22 (MLRVRQLLLLLLFRGPLIDAGA). The VWFD 1 domain maps to 43–256 (GWCSTWGAGH…KLDDPNEICA (214 aa)). Disulfide bonds link Cys45-Cys218 and Cys67-Cys255. An N-linked (GlcNAc...) asparagine glycan is attached at Asn94. Residues 160-183 (HLTEGQGGDEVGTPGTLKQESKGS) form a disordered region. The N-linked (GlcNAc...) asparagine glycan is linked to Asn310. One can recognise a TIL 1 domain in the interval 344–399 (CPANQVYQECGEVCIKTCSNPQHSCSSPCTFGCFCPHGTLLDDISGNQSCVPVNQC). Residues 437 to 621 (GHCSLEGGSF…ALEREMDPCS (185 aa)) form the VWFD 2 domain. 2 disulfides stabilise this stretch: Cys439–Cys575 and Cys461–Cys620. 2 N-linked (GlcNAc...) asparagine glycosylation sites follow: Asn528 and Asn701. Residues 806–869 (CPEPKTFQSC…DGQCVPAEEC (64 aa)) enclose the TIL 2 domain. Residues 908-1080 (STCVLYGEGH…NSWKESPLCG (173 aa)) form the VWFD 3 domain. Intrachain disulfides connect Cys910–Cys1044, Cys932–Cys1079, Cys941–Cys1041, and Cys959–Cys966. 2 N-linked (GlcNAc...) asparagine glycosylation sites follow: Asn1017 and Asn1221. Positions 1263–1281 (EFHSSTSANTPVAPSYLPG) are enriched in low complexity. Disordered regions lie at residues 1263–1363 (EFHS…TAEL), 1377–1400 (GMST…THRV), 1466–1504 (VSAN…PSTT), 1580–1600 (TPPV…RTTH), 1626–1650 (IASP…TSSV), 1705–1813 (TKTS…SLST), 1877–1942 (QTKS…RTTH), 1968–1992 (IASP…TSSV), 2049–2119 (TSFS…PSTT), 2219–2254 (QTKS…TTNS), 2276–2295 (IAHT…SSTT), 2306–2338 (EQST…SPTD), 2370–2473 (TTPP…FRTP), 2511–2621 (PTNP…TFVS), 2634–2674 (PTIH…KSTT), and 2692–2761 (STMG…GTCS). Residues 1294–1312 (EELTVWTTPKESTVSSGEY) show a composition bias toward polar residues. Positions 1345–1363 (TSKPTASSLSSSTKTTAEL) are enriched in low complexity. Polar residues-rich tracts occupy residues 1378-1399 (MSTS…TTHR) and 1466-1484 (VSAN…PVVH). 8 repeat units span residues 1440–1555 (TQNL…PTTE), 1556–1712 (GLNT…FSTD), 1713–1885 (RTST…FSTD), 1886–2054 (RTSA…FSTD), 2055–2227 (RTST…FSTD), 2228–2396 (RTST…FSTE), 2397–2563 (RTST…FPTT), and 2564–2671 (RTST…FSSK). The tract at residues 1440–2671 (TQNLFSTAPH…VPTFSSFSSK (1232 aa)) is approximate repeats. The segment covering 1485–1504 (TTSGTSSSPQTPRTTHPSTT) has biased composition (low complexity). The segment covering 1626 to 1639 (IASPTPSAPQTSLA) has biased composition (polar residues). Low complexity predominate over residues 1705–1719 (TKTSFSTDRTSTSTS). Residues 1720-1757 (APHLSETSAVTAHQSTPTAVSANSIKPTMSSTGTPVVH) are compositionally biased toward polar residues. The span at 1758-1777 (TTSGTTSSPQTPRTTHPSTT) shows a compositional bias: low complexity. Residues 1778 to 1813 (VAVSGTVHTTGLPSGTSVHTTTNFPTHSGPQSSLST) show a composition bias toward polar residues. Over residues 1893-1942 (SQPSTVTPTQSTPIPATTNSLMTTGGLTGTPPVHTTSGTTSSPQTPRTTH) the composition is skewed to low complexity. Over residues 1968-1981 (IASPTPSAPQTSLA) the composition is skewed to polar residues. Positions 2049 to 2061 (TSFSTDRTSTSTS) are enriched in low complexity. Polar residues predominate over residues 2062–2099 (APHLSETSAVTAHQSTPTAVSANSIKPTMSSTGTPVVH). Over residues 2100–2119 (TTSGTTSSPQTPRTTHPSTT) the composition is skewed to low complexity. Polar residues predominate over residues 2227-2238 (DRTSTPHLSQSS). Residues 2282–2295 (TTHSLPTAASSSTT) show a composition bias toward low complexity. Residues 2370-2384 (TTPPNTSTPVTHSTS) are compositionally biased toward low complexity. Residues 2385 to 2429 (ATTEAQGSFSTERTSTSYLSHPSSTTVHQSTAGPVITSIKSTMGV) show a composition bias toward polar residues. The span at 2436–2456 (HTTSGTTSSPQTPHSTHPIST) shows a compositional bias: low complexity. Residues 2457 to 2466 (AAISRTTGIS) show a composition bias toward polar residues. Positions 2516–2533 (SVSSASTSRPLSTSLPTT) are enriched in low complexity. Over residues 2534-2560 (IKGTGTPQTPVSDINTTSATTQAHSSF) the composition is skewed to polar residues. Residues 2561–2584 (PTTRTSTSHLSLPSSMTSTLTPAS) show a composition bias toward low complexity. Positions 2585–2601 (RSASTLQYTPTPSSVSH) are enriched in polar residues. The segment covering 2639–2674 (TPTPSSRPTSSTGLLSTSKTTSHVPTFSSFSSKSTT) has biased composition (low complexity). Polar residues predominate over residues 2692–2725 (STMGMTNLPSSGSPDINHTTRPPGSSPLPTSAFL). Positions 2726-2759 (SRSTSPTGSSSPSTPVSSSNPDSSVSSPPSHPGT) are enriched in low complexity. Disulfide bonds link Cys2760-Cys2807, Cys2774-Cys2821, Cys2783-Cys2841, and Cys2787-Cys2843. The region spanning 2760 to 2849 (CSLQEEEHQI…SCVCSPLQCK (90 aa)) is the CTCK domain.

In terms of assembly, multimer; disulfide-linked. Post-translationally, O-glycosylated. Expressed in stomach, duodenum and small intestine.

The protein localises to the secreted. May provide a mechanism for modulation of the composition of the protective mucus layer related to acid secretion or the presence of bacteria and noxious agents in the lumen. Plays an important role in the cytoprotection of epithelial surfaces and are used as tumor markers in a variety of cancers. May play a role in epithelial organogenesis. This Mus musculus (Mouse) protein is Mucin-6 (Muc6).